We begin with the raw amino-acid sequence, 673 residues long: DNA ligase (673 aa).

Residues 33-37 (DHQYD), 83-84 (SL), and Glu117 contribute to the NAD(+) site. Residue Lys119 is the N6-AMP-lysine intermediate of the active site. Residues Arg140, Glu175, Lys282, and Lys306 each contribute to the NAD(+) site. Zn(2+) contacts are provided by Cys400, Cys403, Cys418, and Cys424. Positions 592 to 673 (RGSSAISGKT…WVKMVEDARS (82 aa)) constitute a BRCT domain.

This sequence belongs to the NAD-dependent DNA ligase family. LigA subfamily. Requires Mg(2+) as cofactor. The cofactor is Mn(2+).

It carries out the reaction NAD(+) + (deoxyribonucleotide)n-3'-hydroxyl + 5'-phospho-(deoxyribonucleotide)m = (deoxyribonucleotide)n+m + AMP + beta-nicotinamide D-nucleotide.. DNA ligase that catalyzes the formation of phosphodiester linkages between 5'-phosphoryl and 3'-hydroxyl groups in double-stranded DNA using NAD as a coenzyme and as the energy source for the reaction. It is essential for DNA replication and repair of damaged DNA. The protein is DNA ligase of Anaplasma marginale (strain Florida).